Here is a 523-residue protein sequence, read N- to C-terminus: Arylsulfatase K (523 aa).

The signal sequence occupies residues 1 to 16 (MLRVFVLLIFNVNAYC). Positions 35 and 75 each coordinate Ca(2+). Catalysis depends on Cys75, which acts as the Nucleophile. A 3-oxoalanine (Cys) modification is found at Cys75. Residue Asn103 is glycosylated (N-linked (GlcNAc...) asparagine). Lys123 and His246 together coordinate substrate. Residue Asn257 is glycosylated (N-linked (GlcNAc...) asparagine). Positions 308 and 309 each coordinate Ca(2+). Asn405 carries N-linked (GlcNAc...) asparagine glycosylation.

Belongs to the sulfatase family. Ca(2+) serves as cofactor. In terms of processing, the conversion to 3-oxoalanine (also known as C-formylglycine, FGly), of a serine or cysteine residue in prokaryotes and of a cysteine residue in eukaryotes, is critical for catalytic activity.

Its subcellular location is the secreted. It localises to the lysosome. The enzyme catalyses an aryl sulfate + H2O = a phenol + sulfate + H(+). The catalysed reaction is Hydrolysis of the 2-sulfate groups of the 2-O-sulfo-D-glucuronate residues of chondroitin sulfate, heparin and heparitin sulfate.. In terms of biological role, catalyzes the hydrolysis of pseudosubstrates such as p-nitrocatechol sulfate and p-nitrophenyl sulfate. Catalyzes the hydrolysis of the 2-sulfate groups of the 2-O-sulfo-D-glucuronate residues of chondroitin sulfate, heparin and heparitin sulfate. Acts selectively on 2-sulfoglucuronate and lacks activity against 2-sulfoiduronate. This is Arylsulfatase K (arsk) from Danio rerio (Zebrafish).